Consider the following 188-residue polypeptide: Nicotinamide/nicotinic acid mononucleotide adenylyltransferase (188 aa).

Belongs to the archaeal NMN adenylyltransferase family.

The catalysed reaction is beta-nicotinamide D-ribonucleotide + ATP + H(+) = diphosphate + NAD(+). It carries out the reaction nicotinate beta-D-ribonucleotide + ATP + H(+) = deamido-NAD(+) + diphosphate. Its pathway is cofactor biosynthesis; NAD(+) biosynthesis; NAD(+) from nicotinamide D-ribonucleotide: step 1/1. It functions in the pathway cofactor biosynthesis; NAD(+) biosynthesis; deamido-NAD(+) from nicotinate D-ribonucleotide: step 1/1. Functionally, dual substrate specificity enzyme that catalyzes the formation of NAD(+) from nicotinamide mononucleotide (NMN) and the formation of deamido-NAD(+) (NaAD) from nicotinate mononucleotide (NaMN). Shows nearly identical catalytic efficiency for both physiological substrates. Plays an essential role in all three routes of NAD biogenesis, de novo synthesis as well as the deamidating and nondeamidating salvage pathways. In Acinetobacter baylyi (strain ATCC 33305 / BD413 / ADP1), this protein is Nicotinamide/nicotinic acid mononucleotide adenylyltransferase.